A 348-amino-acid polypeptide reads, in one-letter code: NADH-ubiquinone oxidoreductase chain 2 (348 aa).

Transmembrane regions (helical) follow at residues 2 to 22 (SPYV…LTLF), 26 to 46 (WLMA…MMTY), 55 to 75 (AAIK…FAII), 96 to 116 (VLMT…FWVP), 149 to 169 (LNMK…GWGG), 178 to 198 (ILAY…MINP), 199 to 219 (SLAL…FLML), 242 to 262 (TAIL…GFMP), 276 to 296 (IIMA…YMRI), and 323 to 343 (INII…TPLL).

Belongs to the complex I subunit 2 family. In terms of assembly, core subunit of respiratory chain NADH dehydrogenase (Complex I) which is composed of 45 different subunits. Interacts with TMEM242.

It is found in the mitochondrion inner membrane. The enzyme catalyses a ubiquinone + NADH + 5 H(+)(in) = a ubiquinol + NAD(+) + 4 H(+)(out). Core subunit of the mitochondrial membrane respiratory chain NADH dehydrogenase (Complex I) that is believed to belong to the minimal assembly required for catalysis. Complex I functions in the transfer of electrons from NADH to the respiratory chain. The immediate electron acceptor for the enzyme is believed to be ubiquinone. In Osphranter robustus (Wallaroo), this protein is NADH-ubiquinone oxidoreductase chain 2.